A 189-amino-acid chain; its full sequence is Interferon alpha-13 (189 aa).

An N-terminal signal peptide occupies residues 1-23 (MARPCAFLMVLVVLSYWSACSLG). 2 disulfide bridges follow: Cys24-Cys122 and Cys52-Cys162. N-linked (GlcNAc...) asparagine glycosylation is found at Asn94 and Asn101.

Belongs to the alpha/beta interferon family.

It is found in the secreted. Its function is as follows. Exhibits antiviral activity against Theiler's virus, Mengo virus and vesicular stomatitis virus. Interferons alpha stimulate the production of two enzymes: a protein kinase and an oligoadenylate synthetase. The chain is Interferon alpha-13 (Ifna13) from Mus musculus (Mouse).